A 501-amino-acid polypeptide reads, in one-letter code: Aspartyl/glutamyl-tRNA(Asn/Gln) amidotransferase subunit B (501 aa).

It belongs to the GatB/GatE family. GatB subfamily. As to quaternary structure, heterotrimer of A, B and C subunits.

It catalyses the reaction L-glutamyl-tRNA(Gln) + L-glutamine + ATP + H2O = L-glutaminyl-tRNA(Gln) + L-glutamate + ADP + phosphate + H(+). It carries out the reaction L-aspartyl-tRNA(Asn) + L-glutamine + ATP + H2O = L-asparaginyl-tRNA(Asn) + L-glutamate + ADP + phosphate + 2 H(+). In terms of biological role, allows the formation of correctly charged Asn-tRNA(Asn) or Gln-tRNA(Gln) through the transamidation of misacylated Asp-tRNA(Asn) or Glu-tRNA(Gln) in organisms which lack either or both of asparaginyl-tRNA or glutaminyl-tRNA synthetases. The reaction takes place in the presence of glutamine and ATP through an activated phospho-Asp-tRNA(Asn) or phospho-Glu-tRNA(Gln). This chain is Aspartyl/glutamyl-tRNA(Asn/Gln) amidotransferase subunit B, found in Mycobacterium sp. (strain KMS).